Here is a 255-residue protein sequence, read N- to C-terminus: 5-oxoprolinase subunit A (255 aa).

This sequence belongs to the LamB/PxpA family. In terms of assembly, forms a complex composed of PxpA, PxpB and PxpC.

The enzyme catalyses 5-oxo-L-proline + ATP + 2 H2O = L-glutamate + ADP + phosphate + H(+). Catalyzes the cleavage of 5-oxoproline to form L-glutamate coupled to the hydrolysis of ATP to ADP and inorganic phosphate. The protein is 5-oxoprolinase subunit A of Pyrococcus furiosus (strain ATCC 43587 / DSM 3638 / JCM 8422 / Vc1).